The chain runs to 117 residues: Large ribosomal subunit protein bL20 (117 aa).

Belongs to the bacterial ribosomal protein bL20 family.

Functionally, binds directly to 23S ribosomal RNA and is necessary for the in vitro assembly process of the 50S ribosomal subunit. It is not involved in the protein synthesizing functions of that subunit. This Streptococcus suis (strain 05ZYH33) protein is Large ribosomal subunit protein bL20.